Consider the following 206-residue polypeptide: Large ribosomal subunit protein uL4 (206 aa).

The segment at 47-77 (GTQSTKTRSEVRGGGIKPWRQKGTGRARQGS) is disordered.

It belongs to the universal ribosomal protein uL4 family. In terms of assembly, part of the 50S ribosomal subunit.

In terms of biological role, one of the primary rRNA binding proteins, this protein initially binds near the 5'-end of the 23S rRNA. It is important during the early stages of 50S assembly. It makes multiple contacts with different domains of the 23S rRNA in the assembled 50S subunit and ribosome. Functionally, forms part of the polypeptide exit tunnel. The chain is Large ribosomal subunit protein uL4 from Clostridium beijerinckii (strain ATCC 51743 / NCIMB 8052) (Clostridium acetobutylicum).